A 77-amino-acid chain; its full sequence is Pi/alpha-stichotoxin-Hmg5b (77 aa).

The signal sequence occupies residues 1–21 (MDYQRLLFLFAVAMVITTTVA). The propeptide occupies 22–34 (LPKDTALMDGQLQ). 3 cysteine pairs are disulfide-bonded: Cys40–Cys73, Cys42–Cys66, and Cys56–Cys74. Met52 carries the post-translational modification Methionine sulfoxide; partial.

This sequence belongs to the sea anemone type 3 (BDS) potassium channel toxin family. Toxin occurs in two forms in the mucus, Hmg 1b-2 which is not oxidized and Hmg 1b-2 MetOx which is oxidized at Met-52.

It localises to the secreted. It is found in the nematocyst. Its function is as follows. The non-oxidized toxin is remarkably non-selective with activity on many different ion channels. Weakly and reversibly inhibits rat and human homomeric ASIC1 (isoform ASIC1a) (IC(50)=4.8 uM, and IC(50)=14.6 uM), and ASIC3 (IC(50)=15.9 uM). Molecular modeling interaction with ASIC1a suggests that this peptide hinders the collapse of acidic pockets and stabilizes nonconducting channels state. It activates several potassium channels including Kv1.1/KCNA1, Kv1.2/KCNA2, and drosophila Shaker IR. It moderately to potently inhibits potassium channels including Kv1.3/KCNA3, Kv1.4/KCNA4, Kv1.5/KCNA5, Kv1.6/KCNA6, Kv2.1/KCNB1, Kv4.2/KCND2, Kv7.1/KCNQ1, Kv7.2/Kv7.3 (KCNQ2/KCNQ3), Kv7.4/KCNQ4, hERG/KCNH2, and C.elegans QKT1. On sodium channels, it moderately to potently inhibits Nav1.1/SCN1A, Nav1.2/SCN2A, Nav1.3/SCN3A, Nav1.4/SCN4A, Nav1.5/SCN5A, Nav1.6/SCN8A, Nav1.7/SCN9A, Nav1.8/SCN10A, and B.germanica BgNav. It also moderately to potently inhibits Cav3.1/CACNA1G, Cav3.2/CACNA1H, and Cav3.3/CACNA1I. Significant shifts in the voltage-current relationship are observed on Kv and Nav, depending on the channel isoform, whereas the toxin does not seem to modulate the voltage-sensor domains of Cav channels, acting mainly as a pore blocker. Does not activate nicotinic acetylcholine receptors (nAChR), but potentiates ACh-elicited current of human alpha-7/CHRNA7 nAChR. Is also able to bind T.californica muscle-type nAChRs. In vivo, causes an excitatory effect in mice behavior. Also shows antihyperalgesic and analgesic activity in the acid-induced muscle pain mice model, and weak anti-inflammatory effect in models of acute local inflammation. Functionally, forms an oxidized toxin derivative (Hmg 1b-2 MetOx). Able to bind T.californica muscle-type nAChRs (alpha-1-beta-1-delta-epsilon (CHRNA1-CHRNB1-CHRND-CHRNE)). This is Pi/alpha-stichotoxin-Hmg5b from Heteractis magnifica (Magnificent sea anemone).